A 230-amino-acid chain; its full sequence is UPF0173 metal-dependent hydrolase Rsph17025_2229 (230 aa).

Belongs to the UPF0173 family.

This Cereibacter sphaeroides (strain ATCC 17025 / ATH 2.4.3) (Rhodobacter sphaeroides) protein is UPF0173 metal-dependent hydrolase Rsph17025_2229.